The primary structure comprises 738 residues: Interleukin-17 receptor D (738 aa).

Positions 1–16 are cleaved as a signal peptide; the sequence is MAPWLQLCSFFFTVNA. Residues 17-299 are Extracellular-facing; the sequence is CLNGSQLAVA…VQSPWAGPIR (283 aa). N-linked (GlcNAc...) asparagine glycans are attached at residues Asn19, Asn55, Asn62, Asn80, Asn137, Asn171, Asn206, and Asn277. A helical transmembrane segment spans residues 300–320; it reads AVAITVPLVVISAFATLFTVM. The Cytoplasmic portion of the chain corresponds to 321–738; the sequence is CRKKQQENIY…TDELQALAPL (418 aa). Residues 355–509 form the SEFIR domain; that stretch reads QPKVFLCYSN…LMDHLPELCA (155 aa). The disordered stretch occupies residues 653–738; the sequence is GSPSEMPRDS…TDELQALAPL (86 aa). The segment covering 667-702 has biased composition (low complexity); the sequence is SSVPSSELSLPLMEGLSPDQIETSSLTESVSSSSGL. Residues 720–731 are compositionally biased toward basic and acidic residues; the sequence is SREHGCHSHTDE.

Self-associates. Interacts with FGFR2 and phosphorylated MAP2K1 or MAP2K2. Associates with a MAP2K1/2-MAPK1/3 complex. Interacts with FGFR1 and MAP3K7.

The protein resides in the golgi apparatus membrane. It localises to the cell membrane. Feedback inhibitor of fibroblast growth factor mediated Ras-MAPK signaling and ERK activation. Regulates the nuclear ERK signaling pathway by spatially blocking nuclear translocation of activated ERK. Mediates JNK activation and may be involved in apoptosis. May inhibit FGF-induced FGFR1 tyrosine phosphorylation. Might have a role in the early stages of fate specification of GnRH-secreting neurons. Inhibits TGFB-induced epithelial-to-mesenchymal transition in lens epithelial cells. The protein is Interleukin-17 receptor D (Il17rd) of Mus musculus (Mouse).